We begin with the raw amino-acid sequence, 213 residues long: Cell division protein SepF 2 (213 aa).

The segment at 16–63 is disordered; the sequence is EDDGYDGRGFDPDDDFEPELDPEPERDRRRHEPPHQSHQALHPQRDES. The span at 27 to 39 shows a compositional bias: acidic residues; sequence PDDDFEPELDPEP.

It belongs to the SepF family. As to quaternary structure, homodimer. Interacts with FtsZ.

It localises to the cytoplasm. Cell division protein that is part of the divisome complex and is recruited early to the Z-ring. Probably stimulates Z-ring formation, perhaps through the cross-linking of FtsZ protofilaments. Its function overlaps with FtsA. This is Cell division protein SepF 2 from Streptomyces avermitilis (strain ATCC 31267 / DSM 46492 / JCM 5070 / NBRC 14893 / NCIMB 12804 / NRRL 8165 / MA-4680).